The following is a 126-amino-acid chain: Protein ApaG (126 aa).

One can recognise an ApaG domain in the interval 2 to 126 (SALDDSIRVE…FRLALPGLLH (125 aa)).

This chain is Protein ApaG, found in Shewanella sp. (strain ANA-3).